Here is a 257-residue protein sequence, read N- to C-terminus: Thiazole synthase (257 aa).

K96 serves as the catalytic Schiff-base intermediate with DXP. 1-deoxy-D-xylulose 5-phosphate-binding positions include G157, 184–185 (AG), and 206–207 (NT).

This sequence belongs to the ThiG family. As to quaternary structure, homotetramer. Forms heterodimers with either ThiH or ThiS.

It is found in the cytoplasm. It carries out the reaction [ThiS sulfur-carrier protein]-C-terminal-Gly-aminoethanethioate + 2-iminoacetate + 1-deoxy-D-xylulose 5-phosphate = [ThiS sulfur-carrier protein]-C-terminal Gly-Gly + 2-[(2R,5Z)-2-carboxy-4-methylthiazol-5(2H)-ylidene]ethyl phosphate + 2 H2O + H(+). The protein operates within cofactor biosynthesis; thiamine diphosphate biosynthesis. Catalyzes the rearrangement of 1-deoxy-D-xylulose 5-phosphate (DXP) to produce the thiazole phosphate moiety of thiamine. Sulfur is provided by the thiocarboxylate moiety of the carrier protein ThiS. In vitro, sulfur can be provided by H(2)S. This chain is Thiazole synthase, found in Agrobacterium fabrum (strain C58 / ATCC 33970) (Agrobacterium tumefaciens (strain C58)).